A 351-amino-acid chain; its full sequence is Auxin-responsive protein IAA27 (351 aa).

Residues 1–37 (MMNLISFETPPLGRRSQDGGSSSSSITAATTTTNKAK) are disordered. Low complexity predominate over residues 21-34 (SSSSSITAATTTTN). Residues 233-327 (NMFAKVHMDG…SAKRLYIAKN (95 aa)) enclose the PB1 domain.

The protein belongs to the Aux/IAA family. As to quaternary structure, homodimers and heterodimers. As to expression, expressed in roots and seedlings.

The protein localises to the nucleus. In terms of biological role, aux/IAA proteins are short-lived transcriptional factors that function as repressors of early auxin response genes at low auxin concentrations. The sequence is that of Auxin-responsive protein IAA27 (IAA27) from Oryza sativa subsp. japonica (Rice).